We begin with the raw amino-acid sequence, 364 residues long: Probable UDP-arabinopyranose mutase 1 (364 aa).

The DXD motif motif lies at 110 to 112; sequence DDD. Arginine 158 carries N-linked (Glc...) arginine glycosylation.

Belongs to the RGP family. As to quaternary structure, homopentamer or homohexamer. It depends on Mn(2+) as a cofactor. Mg(2+) is required as a cofactor. Reversibly glycosylated by UDP-glucose, UDP-xylose and UDP-galactose.

It is found in the secreted. The protein localises to the cell wall. It localises to the cell junction. Its subcellular location is the plasmodesma. The protein resides in the golgi apparatus. The catalysed reaction is UDP-beta-L-arabinofuranose = UDP-beta-L-arabinopyranose. In terms of biological role, probable UDP-L-arabinose mutase involved in the biosynthesis of cell wall non-cellulosic polysaccharides. Was initially shown to possess an autoglycosylating activity which is dependent on the presence of UDP-glucose and manganese. The sequence is that of Probable UDP-arabinopyranose mutase 1 from Zea mays (Maize).